The following is a 102-amino-acid chain: Putative RNA-binding protein RbpA (102 aa).

Residues 2-79 (SIYVGNLSYE…RDLKVNKAKP (78 aa)) enclose the RRM domain. Residues 73 to 84 (KVNKAKPREDRG) are compositionally biased toward basic and acidic residues. Residues 73–102 (KVNKAKPREDRGPSGGNRGGYGGGGGRNRY) are disordered. Residues 85–102 (PSGGNRGGYGGGGGRNRY) show a composition bias toward gly residues.

This chain is Putative RNA-binding protein RbpA (rbpA), found in Nostoc sp. (strain PCC 7120 / SAG 25.82 / UTEX 2576).